Consider the following 397-residue polypeptide: Enoyl-[acyl-carrier-protein] reductase [NADH] (397 aa).

NAD(+) is bound by residues 48–53, 74–75, 111–112, and 139–140; these read GASTGY, FE, DA, and VA. Y225 serves as a coordination point for substrate. Residue Y235 is the Proton donor of the active site. NAD(+)-binding positions include K244 and 273–275; that span reads VVT.

The protein belongs to the TER reductase family. As to quaternary structure, monomer.

It catalyses the reaction a 2,3-saturated acyl-[ACP] + NAD(+) = a (2E)-enoyl-[ACP] + NADH + H(+). It participates in lipid metabolism; fatty acid biosynthesis. Involved in the final reduction of the elongation cycle of fatty acid synthesis (FAS II). Catalyzes the reduction of a carbon-carbon double bond in an enoyl moiety that is covalently linked to an acyl carrier protein (ACP). The chain is Enoyl-[acyl-carrier-protein] reductase [NADH] from Burkholderia mallei (strain NCTC 10247).